The primary structure comprises 395 residues: 1-deoxy-D-xylulose 5-phosphate reductoisomerase (395 aa).

Residues Thr10, Gly11, Ser12, Ile13, Arg37, Gln38, and Asn124 each coordinate NADPH. Lys125 contributes to the 1-deoxy-D-xylulose 5-phosphate binding site. Residue Glu126 participates in NADPH binding. Asp150 lines the Mn(2+) pocket. Residues Ser151, Glu152, Ser179, and His202 each coordinate 1-deoxy-D-xylulose 5-phosphate. Glu152 lines the Mn(2+) pocket. Residue Gly208 coordinates NADPH. Positions 215, 220, 221, and 224 each coordinate 1-deoxy-D-xylulose 5-phosphate. A Mn(2+)-binding site is contributed by Glu224.

This sequence belongs to the DXR family. It depends on Mg(2+) as a cofactor. The cofactor is Mn(2+).

It carries out the reaction 2-C-methyl-D-erythritol 4-phosphate + NADP(+) = 1-deoxy-D-xylulose 5-phosphate + NADPH + H(+). It functions in the pathway isoprenoid biosynthesis; isopentenyl diphosphate biosynthesis via DXP pathway; isopentenyl diphosphate from 1-deoxy-D-xylulose 5-phosphate: step 1/6. Its function is as follows. Catalyzes the NADPH-dependent rearrangement and reduction of 1-deoxy-D-xylulose-5-phosphate (DXP) to 2-C-methyl-D-erythritol 4-phosphate (MEP). The sequence is that of 1-deoxy-D-xylulose 5-phosphate reductoisomerase from Cupriavidus pinatubonensis (strain JMP 134 / LMG 1197) (Cupriavidus necator (strain JMP 134)).